Consider the following 272-residue polypeptide: Endoplasmic reticulum resident protein 27 (272 aa).

Residues 1–25 (MKITRSRCLILSFVLVCGLVPEVTA) form the signal peptide. The region spanning 39-152 (EPIWLTDVPA…WVTEYSPMIA (114 aa)) is the Thioredoxin domain. 2 N-linked (GlcNAc...) asparagine glycosylation sites follow: Asn91 and Asn100. A PDIA3-binding site region spans residues 230–233 (DKWD). A Prevents secretion from ER motif is present at residues 269-272 (KEEL).

This sequence belongs to the protein disulfide isomerase family. As to quaternary structure, interacts with PDIA3.

Its subcellular location is the endoplasmic reticulum lumen. Specifically binds unfolded proteins and may recruit protein disulfide isomerase PDIA3 to unfolded substrates. Binds protein substrates via a hydrophobic pocket in the C-terminal domain. May play a role in the unfolded stress response. The protein is Endoplasmic reticulum resident protein 27 (Erp27) of Mus musculus (Mouse).